The chain runs to 101 residues: Defensin-like protein 222 (101 aa).

The N-terminal stretch at 1–21 is a signal peptide; that stretch reads MRTIVLFSTLMILVLSCMSNA. 3 cysteine pairs are disulfide-bonded: Cys68–Cys85, Cys71–Cys90, and Cys75–Cys92.

It belongs to the DEFL family.

It localises to the secreted. The chain is Defensin-like protein 222 from Arabidopsis thaliana (Mouse-ear cress).